The primary structure comprises 410 residues: Peptidase T (410 aa).

Histidine 79 provides a ligand contact to Zn(2+). The active site involves aspartate 81. Residue aspartate 142 participates in Zn(2+) binding. Glutamate 176 functions as the Proton acceptor in the catalytic mechanism. Glutamate 177, aspartate 199, and histidine 381 together coordinate Zn(2+).

This sequence belongs to the peptidase M20B family. Zn(2+) is required as a cofactor.

The protein localises to the cytoplasm. The enzyme catalyses Release of the N-terminal residue from a tripeptide.. In terms of biological role, cleaves the N-terminal amino acid of tripeptides. In Listeria monocytogenes serotype 4a (strain HCC23), this protein is Peptidase T.